The primary structure comprises 254 residues: Precorrin-3B C(17)-methyltransferase (254 aa).

Belongs to the precorrin methyltransferase family.

It catalyses the reaction precorrin-3B + S-adenosyl-L-methionine = precorrin-4 + S-adenosyl-L-homocysteine + 3 H(+). Its pathway is cofactor biosynthesis; adenosylcobalamin biosynthesis; cob(II)yrinate a,c-diamide from precorrin-2 (aerobic route): step 3/10. Its function is as follows. Methyltransferase that catalyzes the methylation of C-17 in precorrin-3B to form precorrin-4. This is Precorrin-3B C(17)-methyltransferase (cobJ) from Sinorhizobium sp.